The chain runs to 24 residues: Acidic phospholipase A2 4 (24 aa).

Belongs to the phospholipase A2 family. Group II subfamily. Ca(2+) serves as cofactor. In terms of tissue distribution, expressed by the venom gland.

It is found in the secreted. It carries out the reaction a 1,2-diacyl-sn-glycero-3-phosphocholine + H2O = a 1-acyl-sn-glycero-3-phosphocholine + a fatty acid + H(+). PLA2 catalyzes the calcium-dependent hydrolysis of the 2-acyl groups in 3-sn-phosphoglycerides. The chain is Acidic phospholipase A2 4 from Trimeresurus stejnegeri (Chinese green tree viper).